Reading from the N-terminus, the 137-residue chain is MMQPKKTKFRKAHKGRIHGVASSGATLAFGQFGLKAMEPDRVTARQIEAARRALTRHMKRAGRVWIRVFPDLPVSKKPAEVRMGSGKGSPELWVARVKPGRVMFEIDGVSNQIAREALLLAAAKLPIKTRFVERIAE.

This sequence belongs to the universal ribosomal protein uL16 family. Part of the 50S ribosomal subunit.

Binds 23S rRNA and is also seen to make contacts with the A and possibly P site tRNAs. This chain is Large ribosomal subunit protein uL16, found in Bradyrhizobium sp. (strain BTAi1 / ATCC BAA-1182).